The following is a 119-amino-acid chain: Large ribosomal subunit protein uL18 (119 aa).

This sequence belongs to the universal ribosomal protein uL18 family. In terms of assembly, part of the 50S ribosomal subunit; part of the 5S rRNA/L5/L18/L25 subcomplex. Contacts the 5S and 23S rRNAs.

In terms of biological role, this is one of the proteins that bind and probably mediate the attachment of the 5S RNA into the large ribosomal subunit, where it forms part of the central protuberance. The sequence is that of Large ribosomal subunit protein uL18 from Xylella fastidiosa (strain 9a5c).